The following is a 1052-amino-acid chain: Mediator of RNA polymerase II transcription subunit 5 (1052 aa).

The segment at 949–982 is disordered; that stretch reads GGDDEQREQHQQQQPDADQSNQGVVAPTGNTPGN. The segment covering 959 to 970 has biased composition (low complexity); the sequence is QQQQPDADQSNQ.

Belongs to the Mediator complex subunit 5 family. Component of the Mediator complex.

The protein localises to the nucleus. Component of the Mediator complex, a coactivator involved in the regulated transcription of nearly all RNA polymerase II-dependent genes. Mediator functions as a bridge to convey information from gene-specific regulatory proteins to the basal RNA polymerase II transcription machinery. Mediator is recruited to promoters by direct interactions with regulatory proteins and serves as a scaffold for the assembly of a functional preinitiation complex with RNA polymerase II and the general transcription factors. This Coccidioides immitis (strain RS) (Valley fever fungus) protein is Mediator of RNA polymerase II transcription subunit 5 (NUT1).